The chain runs to 441 residues: Histidinol dehydrogenase homolog (441 aa).

His-266 contacts Zn(2+). Catalysis depends on proton acceptor residues Glu-334 and His-335. His-427 is a binding site for Zn(2+).

This sequence belongs to the histidinol dehydrogenase family. It depends on Zn(2+) as a cofactor.

In Cereibacter sphaeroides (strain ATCC 17023 / DSM 158 / JCM 6121 / CCUG 31486 / LMG 2827 / NBRC 12203 / NCIMB 8253 / ATH 2.4.1.) (Rhodobacter sphaeroides), this protein is Histidinol dehydrogenase homolog.